The chain runs to 278 residues: 4-deoxy-L-threo-5-hexosulose-uronate ketol-isomerase (278 aa).

Residues H196, H198, E203, and H245 each coordinate Zn(2+).

Belongs to the KduI family. The cofactor is Zn(2+).

It catalyses the reaction 5-dehydro-4-deoxy-D-glucuronate = 3-deoxy-D-glycero-2,5-hexodiulosonate. It functions in the pathway glycan metabolism; pectin degradation; 2-dehydro-3-deoxy-D-gluconate from pectin: step 4/5. Functionally, catalyzes the isomerization of 5-dehydro-4-deoxy-D-glucuronate to 3-deoxy-D-glycero-2,5-hexodiulosonate. The polypeptide is 4-deoxy-L-threo-5-hexosulose-uronate ketol-isomerase (Salmonella dublin (strain CT_02021853)).